The chain runs to 366 residues: Phospho-N-acetylmuramoyl-pentapeptide-transferase (366 aa).

A run of 10 helical transmembrane segments spans residues 27–47 (AALF…INSL), 71–91 (TPTM…LLWA), 93–113 (LSNV…AIGF), 138–158 (FVIA…SGIA), 174–194 (FMIN…VGAG), 205–225 (GLAI…AYLA), 245–265 (LAVV…FNAP), 268–288 (AIFM…TVAV), 294–314 (IVMA…IIQV), and 343–363 (QVVI…LSTL).

It belongs to the glycosyltransferase 4 family. MraY subfamily. The cofactor is Mg(2+).

The protein localises to the cell inner membrane. It carries out the reaction UDP-N-acetyl-alpha-D-muramoyl-L-alanyl-gamma-D-glutamyl-meso-2,6-diaminopimeloyl-D-alanyl-D-alanine + di-trans,octa-cis-undecaprenyl phosphate = di-trans,octa-cis-undecaprenyl diphospho-N-acetyl-alpha-D-muramoyl-L-alanyl-D-glutamyl-meso-2,6-diaminopimeloyl-D-alanyl-D-alanine + UMP. It participates in cell wall biogenesis; peptidoglycan biosynthesis. In terms of biological role, catalyzes the initial step of the lipid cycle reactions in the biosynthesis of the cell wall peptidoglycan: transfers peptidoglycan precursor phospho-MurNAc-pentapeptide from UDP-MurNAc-pentapeptide onto the lipid carrier undecaprenyl phosphate, yielding undecaprenyl-pyrophosphoryl-MurNAc-pentapeptide, known as lipid I. This chain is Phospho-N-acetylmuramoyl-pentapeptide-transferase, found in Rhizobium johnstonii (strain DSM 114642 / LMG 32736 / 3841) (Rhizobium leguminosarum bv. viciae).